A 389-amino-acid polypeptide reads, in one-letter code: MSNFLPDSSCYELLTIIGRGFEDLMVVNLARYKPSGEYVTVRRVNLEACTNEMVTFLQGELHVSKLFNHPNIVPYKATFIADNELWVVTSFMAYGSAKDLICTHFMDGMSELAIAYILQGVLKALDYIHHMGYVHRSVKASHILISVDGKVYLSGLRSNLSMINHGQRLKVVHDFPKYSIKVLPWLSPEVLQQNLQGYDAKSDIYSIGITACELANGHVPFKDMPSTQMLLEKLNGTVPCLLDTTTIPADELTMKTSRSSANYGLGESTAVSNVRAANGESTLHPYLRTFSSCFHNFVGQCLQRNPDFRPSAGALLNHPFFKQIKRRASEALPELLRPVTPITNFEGTRPQDPSGILGWCQTWSSWMWMTGNSRKTKTALGSGGAFWTL.

The 311-residue stretch at Y11–F321 folds into the Protein kinase domain.

The protein belongs to the protein kinase superfamily. STE Ser/Thr protein kinase family. STE20 subfamily. Component of a trimeric complex composed of STK11/LKB1, STRAD (STRADA or STRADB) and CAB39/MO25 (CAB39/MO25alpha or CAB39L/MO25beta): the complex tethers STK11/LKB1 in the cytoplasm and stimulates its catalytic activity. As to expression, expressed in brain, hypothalamus, heart and skeletal muscle.

Its subcellular location is the nucleus. It localises to the cytoplasm. Functionally, pseudokinase which, in complex with CAB39/MO25 (CAB39/MO25alpha or CAB39L/MO25beta), binds to and activates STK11/LKB1. Adopts a closed conformation typical of active protein kinases and binds STK11/LKB1 as a pseudosubstrate, promoting conformational change of STK11/LKB1 in an active conformation. This Gallus gallus (Chicken) protein is STE20-related kinase adapter protein alpha (STRADA).